A 460-amino-acid polypeptide reads, in one-letter code: Fumarate hydratase class II (460 aa).

Substrate contacts are provided by residues 95-97 (SGT), 126-129 (HPND), 136-138 (SSN), and Thr184. The active-site Proton donor/acceptor is the His185. The active site involves Ser315. Substrate contacts are provided by residues Ser316 and 321-323 (KVN).

This sequence belongs to the class-II fumarase/aspartase family. Fumarase subfamily. In terms of assembly, homotetramer.

The protein resides in the cytoplasm. The catalysed reaction is (S)-malate = fumarate + H2O. The protein operates within carbohydrate metabolism; tricarboxylic acid cycle; (S)-malate from fumarate: step 1/1. Its function is as follows. Involved in the TCA cycle. Catalyzes the stereospecific interconversion of fumarate to L-malate. This Chlamydia pneumoniae (Chlamydophila pneumoniae) protein is Fumarate hydratase class II.